Reading from the N-terminus, the 514-residue chain is Folylpolyglutamate synthase (514 aa).

82-85 (GKGS) contacts ATP. Mg(2+) is bound by residues Ser-107, Glu-186, and His-214. ATP-binding residues include Arg-339 and Asp-355.

Belongs to the folylpolyglutamate synthase family. A monovalent cation is required as a cofactor.

The protein resides in the mitochondrion inner membrane. The protein localises to the mitochondrion matrix. It localises to the cytoplasm. The catalysed reaction is (6S)-5,6,7,8-tetrahydrofolyl-(gamma-L-Glu)(n) + L-glutamate + ATP = (6S)-5,6,7,8-tetrahydrofolyl-(gamma-L-Glu)(n+1) + ADP + phosphate + H(+). It functions in the pathway cofactor biosynthesis; tetrahydrofolylpolyglutamate biosynthesis. Functionally, catalyzes conversion of folates to polyglutamate derivatives allowing concentration of folate compounds in the cell and the intracellular retention of these cofactors, which are important substrates for most of the folate-dependent enzymes that are involved in one-carbon transfer reactions involved in purine, pyrimidine and amino acid synthesis. This Candida albicans (Yeast) protein is Folylpolyglutamate synthase (MET7).